A 330-amino-acid polypeptide reads, in one-letter code: Aspartate--ammonia ligase (330 aa).

The protein belongs to the class-II aminoacyl-tRNA synthetase family. AsnA subfamily.

The protein localises to the cytoplasm. It catalyses the reaction L-aspartate + NH4(+) + ATP = L-asparagine + AMP + diphosphate + H(+). Its pathway is amino-acid biosynthesis; L-asparagine biosynthesis; L-asparagine from L-aspartate (ammonia route): step 1/1. In Salmonella schwarzengrund (strain CVM19633), this protein is Aspartate--ammonia ligase.